An 841-amino-acid chain; its full sequence is Protein NLP6 (841 aa).

The 86-residue stretch at 539 to 624 (EAKTVKKSER…IDSVQGADGS (86 aa)) folds into the RWP-RK domain. A disordered region spans residues 649–682 (NCPPTSTSPLSNLQDVKIENRDAEDSAGSSTSRA). The span at 651–662 (PPTSTSPLSNLQ) shows a compositional bias: polar residues. The 83-residue stretch at 741 to 823 (LVSIKATYRE…NTLRLSVHDV (83 aa)) folds into the PB1 domain.

Its subcellular location is the nucleus. In terms of biological role, probable transcription factor. In Arabidopsis thaliana (Mouse-ear cress), this protein is Protein NLP6 (NLP6).